Here is a 556-residue protein sequence, read N- to C-terminus: CDP-diacylglycerol--glycerol-3-phosphate 3-phosphatidyltransferase, mitochondrial (556 aa).

The transit peptide at Met1–Ala28 directs the protein to the mitochondrion. Residue Ser49 is modified to Phosphoserine. Ala124–Gly131 provides a ligand contact to ATP. PLD phosphodiesterase domains follow at residues Thr215–Tyr241 and Arg460–Ser493. Active-site residues include His220, Lys222, and Asp227.

Belongs to the CDP-alcohol phosphatidyltransferase class-II family.

The protein resides in the mitochondrion. It catalyses the reaction a CDP-1,2-diacyl-sn-glycerol + sn-glycerol 3-phosphate = a 1,2-diacyl-sn-glycero-3-phospho-(1'-sn-glycero-3'-phosphate) + CMP + H(+). It participates in phospholipid metabolism; phosphatidylglycerol biosynthesis; phosphatidylglycerol from CDP-diacylglycerol: step 1/2. Activated by calcium and magnesium and inhibited by other bivalent cations. Functionally, functions in the biosynthesis of the anionic phospholipids phosphatidylglycerol and cardiolipin. The chain is CDP-diacylglycerol--glycerol-3-phosphate 3-phosphatidyltransferase, mitochondrial (PGS1) from Pongo abelii (Sumatran orangutan).